The primary structure comprises 434 residues: Trigger factor (434 aa).

Residues 162-247 (GDKINISLIA…FNTVEQAKLP (86 aa)) enclose the PPIase FKBP-type domain.

It belongs to the FKBP-type PPIase family. Tig subfamily.

The protein resides in the cytoplasm. The catalysed reaction is [protein]-peptidylproline (omega=180) = [protein]-peptidylproline (omega=0). Involved in protein export. Acts as a chaperone by maintaining the newly synthesized protein in an open conformation. Functions as a peptidyl-prolyl cis-trans isomerase. In Methylobacillus flagellatus (strain ATCC 51484 / DSM 6875 / VKM B-1610 / KT), this protein is Trigger factor.